A 347-amino-acid polypeptide reads, in one-letter code: Ribosomal RNA large subunit methyltransferase M (347 aa).

Residues Ser184, 217–220 (APGG), Asp236, Asp256, and Asp272 each bind S-adenosyl-L-methionine. The active-site Proton acceptor is Lys301.

This sequence belongs to the class I-like SAM-binding methyltransferase superfamily. RNA methyltransferase RlmE family. RlmM subfamily. In terms of assembly, monomer.

The protein localises to the cytoplasm. The catalysed reaction is cytidine(2498) in 23S rRNA + S-adenosyl-L-methionine = 2'-O-methylcytidine(2498) in 23S rRNA + S-adenosyl-L-homocysteine + H(+). Catalyzes the 2'-O-methylation at nucleotide C2498 in 23S rRNA. This chain is Ribosomal RNA large subunit methyltransferase M, found in Xanthomonas oryzae pv. oryzae (strain KACC10331 / KXO85).